We begin with the raw amino-acid sequence, 375 residues long: Enoyl-[acyl-carrier-protein] reductase, mitochondrial (375 aa).

The transit peptide at 1-37 (MAALMESVVGRALKFSSTANFRSIRRGETPTLCIKSF) directs the protein to the mitochondrion. Tyr-96 serves as the catalytic Proton donor. NADP(+)-binding positions include Asn-169, 195–198 (TSIV), 218–220 (RDR), 287–290 (YGGM), 312–314 (FWL), and Lys-370.

This sequence belongs to the zinc-containing alcohol dehydrogenase family. Quinone oxidoreductase subfamily. Homodimer.

The protein resides in the mitochondrion. It catalyses the reaction a 2,3-saturated acyl-[ACP] + NADP(+) = a (2E)-enoyl-[ACP] + NADPH + H(+). Functionally, catalyzes the NADPH-dependent reduction of trans-2-enoyl thioesters in mitochondrial fatty acid synthesis (fatty acid synthesis type II). Fatty acid chain elongation in mitochondria uses acyl carrier protein (ACP) as an acyl group carrier, but the enzyme accepts both ACP and CoA thioesters as substrates in vitro. The protein is Enoyl-[acyl-carrier-protein] reductase, mitochondrial of Arabidopsis thaliana (Mouse-ear cress).